The primary structure comprises 266 residues: Type II iodothyronine deiodinase (266 aa).

Residues 1–13 (MGSASEDLLVTLQ) lie on the Lumenal side of the membrane. A helical; Signal-anchor for type III membrane protein membrane pass occupies residues 14–34 (ILPGFFSNCLFLALYDSVVLV). The Cytoplasmic portion of the chain corresponds to 35-266 (KRVVALLSRS…QWLELSYGRR (232 aa)). Sec134 is an active-site residue. Sec134 is a non-standard amino acid (selenocysteine).

Belongs to the iodothyronine deiodinase family. As to quaternary structure, predominantly monomer. Can form homodimers but homodimerization is not essential for enzyme activity.

The protein resides in the endoplasmic reticulum membrane. It carries out the reaction 3,3',5-triiodo-L-thyronine + iodide + A + H(+) = L-thyroxine + AH2. It catalyses the reaction 3,3'-diiodo-L-thyronine + iodide + A + H(+) = 3,3',5'-triiodo-L-thyronine + AH2. The enzyme catalyses 3'-iodo-L-thyronine + iodide + A + H(+) = 3',5'-diiodo-L-thyronine + AH2. Not inhibited by N(6)-propylthiouracil. In terms of biological role, plays a crucial role in the metabolism of thyroid hormones (TH) and has specific roles in TH activation and inactivation by deiodination. Catalyzes the conversion of T4 (L-thyroxine/3,5,3',5'-tetraiodothyronine) to T3 (3,5,3'-triiodothyronine) and rT3 (3,3',5'-triiodothyronine) to T2 (3,3'-diiodothyronine) via outer-ring deiodination (ORD). Catalyzes the conversion 3',5'-T2 (3,5-diiodothyronine) to 3-T1 (3-monoiodothyronine) via ORD. In Fundulus heteroclitus (Killifish), this protein is Type II iodothyronine deiodinase (dio2).